The primary structure comprises 418 residues: Serine--tRNA ligase (418 aa).

231 to 233 (TAE) is a binding site for L-serine. 262–264 (RSE) lines the ATP pocket. Glu-285 is an L-serine binding site. 349–352 (EISS) is a binding site for ATP. Ser-385 is an L-serine binding site.

This sequence belongs to the class-II aminoacyl-tRNA synthetase family. Type-1 seryl-tRNA synthetase subfamily. Homodimer. The tRNA molecule binds across the dimer.

Its subcellular location is the cytoplasm. It carries out the reaction tRNA(Ser) + L-serine + ATP = L-seryl-tRNA(Ser) + AMP + diphosphate + H(+). The catalysed reaction is tRNA(Sec) + L-serine + ATP = L-seryl-tRNA(Sec) + AMP + diphosphate + H(+). Its pathway is aminoacyl-tRNA biosynthesis; selenocysteinyl-tRNA(Sec) biosynthesis; L-seryl-tRNA(Sec) from L-serine and tRNA(Sec): step 1/1. In terms of biological role, catalyzes the attachment of serine to tRNA(Ser). Is also able to aminoacylate tRNA(Sec) with serine, to form the misacylated tRNA L-seryl-tRNA(Sec), which will be further converted into selenocysteinyl-tRNA(Sec). The sequence is that of Serine--tRNA ligase from Ureaplasma urealyticum serovar 10 (strain ATCC 33699 / Western).